Consider the following 280-residue polypeptide: Large ribosomal subunit protein uL2 (280 aa).

Residues 229 to 280 (DHPHGGGEGKAPIGHPSPLTPWGKPTLGYKTRKKRKPSDRFIIQRANDKKEK) are disordered.

It belongs to the universal ribosomal protein uL2 family. Part of the 50S ribosomal subunit. Forms a bridge to the 30S subunit in the 70S ribosome.

Functionally, one of the primary rRNA binding proteins. Required for association of the 30S and 50S subunits to form the 70S ribosome, for tRNA binding and peptide bond formation. It has been suggested to have peptidyltransferase activity; this is somewhat controversial. Makes several contacts with the 16S rRNA in the 70S ribosome. The chain is Large ribosomal subunit protein uL2 from Dictyoglomus turgidum (strain DSM 6724 / Z-1310).